Here is a 492-residue protein sequence, read N- to C-terminus: Auxin transporter-like protein 1 (492 aa).

The Cytoplasmic segment spans residues 1-67 (MVPREQAEEA…DAWFSCASNQ (67 aa)). Residues 68–85 (VAQVLLTLPYSFSQLGML) form a helical membrane-spanning segment. The Extracellular segment spans residues 86–87 (SG). The chain crosses the membrane as a helical span at residues 88 to 108 (VLLQLFYGFMGSWTAYLISVL). Over 109–143 (YVEYRSRKEKEGVSFKNHVIQWFEVLDGLLGPYWK) the chain is Cytoplasmic. Residues 144 to 164 (AAGLAFNCTFLLFGSVIQLIA) traverse the membrane as a helical segment. Over 165-180 (CASNIYYINDRLDKRT) the chain is Extracellular. Residues 181 to 201 (WTYIFGACCATTVFIPSFHNY) form a helical membrane-spanning segment. Arg202 is a topological domain (cytoplasmic). The chain crosses the membrane as a helical span at residues 203 to 223 (IWSFLGLGMTTYTAWYLAIAA). The Extracellular portion of the chain corresponds to 224 to 240 (LLNGQAEGITHTGPTKL). The helical transmembrane segment at 241–261 (VLYFTGATNILYTFGGHAVTV) threads the bilayer. Topologically, residues 262–274 (EIMHAMWKPAKFK) are cytoplasmic. A helical transmembrane segment spans residues 275-295 (YIYLLATLYVFTLTLPSASAM). The Extracellular portion of the chain corresponds to 296–322 (YWAFGDELLTHSNAFSLLPKTGWRDAA). The helical transmembrane segment at 323 to 343 (VILMLIHQFITFGFACTPLYF) threads the bilayer. The Cytoplasmic portion of the chain corresponds to 344-364 (VWEKVIGMHDTKSICLRALAR). Residues 365–385 (LPIVVPIWFLAIIFPFFGPIN) traverse the membrane as a helical segment. Residue Ser386 is a topological domain, extracellular. Residues 387–407 (AVGALLVSFTVYIIPALAHIL) traverse the membrane as a helical segment. Residues 408-432 (TYRTASARMNAAEKPPFFLPSWTGM) are Cytoplasmic-facing. The helical transmembrane segment at 433 to 453 (FVLNMFIVVWVLVVGFGLGGW) threads the bilayer. Residues 454–492 (ASMVNFIRQIDTFGLFAKCYQCPKPAPALAQSPVPLPHH) lie on the Extracellular side of the membrane.

It belongs to the amino acid/polyamine transporter 2 family. Amino acid/auxin permease (AAAP) (TC 2.A.18.1) subfamily.

It localises to the cell membrane. Carrier protein involved in proton-driven auxin influx. May mediate the formation of auxin gradient from developing leaves (site of auxin biosynthesis) to tips. In Oryza sativa subsp. japonica (Rice), this protein is Auxin transporter-like protein 1.